A 178-amino-acid chain; its full sequence is ATP synthase subunit delta (178 aa).

Belongs to the ATPase delta chain family. In terms of assembly, F-type ATPases have 2 components, F(1) - the catalytic core - and F(0) - the membrane proton channel. F(1) has five subunits: alpha(3), beta(3), gamma(1), delta(1), epsilon(1). F(0) has three main subunits: a(1), b(2) and c(10-14). The alpha and beta chains form an alternating ring which encloses part of the gamma chain. F(1) is attached to F(0) by a central stalk formed by the gamma and epsilon chains, while a peripheral stalk is formed by the delta and b chains.

The protein resides in the cell membrane. F(1)F(0) ATP synthase produces ATP from ADP in the presence of a proton or sodium gradient. F-type ATPases consist of two structural domains, F(1) containing the extramembraneous catalytic core and F(0) containing the membrane proton channel, linked together by a central stalk and a peripheral stalk. During catalysis, ATP synthesis in the catalytic domain of F(1) is coupled via a rotary mechanism of the central stalk subunits to proton translocation. Functionally, this protein is part of the stalk that links CF(0) to CF(1). It either transmits conformational changes from CF(0) to CF(1) or is implicated in proton conduction. The sequence is that of ATP synthase subunit delta from Streptococcus agalactiae serotype Ia (strain ATCC 27591 / A909 / CDC SS700).